The chain runs to 269 residues: MEKIKIIVASDSIGETAELVARAGISQFNPKQCKNELLRYPYIESFEDVDEVIQVAKDTNAIIVYTLIKPEMKQYMSEKVAEFQLKSVDIMGPLMDLLSASVEEKPYNEPGIVHRLDDAYFKKIDAIEFAVKYDDGKDPKGLPKADIVLLGISRTSKTPLSQYLAHKSYKVMNVPIVPEVTPPDGLYDIDPKKCIALKISEEKLNRIRKERLKQLGLGDTARYATDQEELNYFEEIVSEIGCPVIDVSQKAIEETANDIIHYIEQNKSK.

151-158 (GISRTSKT) lines the ADP pocket.

Belongs to the pyruvate, phosphate/water dikinase regulatory protein family. PDRP subfamily.

It carries out the reaction N(tele)-phospho-L-histidyl/L-threonyl-[pyruvate, phosphate dikinase] + ADP = N(tele)-phospho-L-histidyl/O-phospho-L-threonyl-[pyruvate, phosphate dikinase] + AMP + H(+). The enzyme catalyses N(tele)-phospho-L-histidyl/O-phospho-L-threonyl-[pyruvate, phosphate dikinase] + phosphate + H(+) = N(tele)-phospho-L-histidyl/L-threonyl-[pyruvate, phosphate dikinase] + diphosphate. Bifunctional serine/threonine kinase and phosphorylase involved in the regulation of the pyruvate, phosphate dikinase (PPDK) by catalyzing its phosphorylation/dephosphorylation. This chain is Putative pyruvate, phosphate dikinase regulatory protein, found in Staphylococcus aureus.